Reading from the N-terminus, the 197-residue chain is RNA pyrophosphohydrolase (197 aa).

Positions 6 to 149 (GYRPNVGIVI…KRDVYRKAMK (144 aa)) constitute a Nudix hydrolase domain. The short motif at 38–59 (GGINDGETPEQAMYRELYEEVG) is the Nudix box element. A disordered region spans residues 165-197 (LSTNNNDEKKANYSAKKPYSPYRNQDKKRKTRV).

The protein belongs to the Nudix hydrolase family. RppH subfamily. It depends on a divalent metal cation as a cofactor.

Its function is as follows. Accelerates the degradation of transcripts by removing pyrophosphate from the 5'-end of triphosphorylated RNA, leading to a more labile monophosphorylated state that can stimulate subsequent ribonuclease cleavage. The polypeptide is RNA pyrophosphohydrolase (Mannheimia succiniciproducens (strain KCTC 0769BP / MBEL55E)).